Reading from the N-terminus, the 384-residue chain is DNA dC-&gt;dU-editing enzyme APOBEC-3G (384 aa).

The tract at residues 1–60 is essential for cytoplasmic localization; sequence MKPHFRNPVERMYQDTFSDNFYNRPILSHRNTVWLCYEVKTKGPSRPPLDAKIFRGQVYS. 2 CMP/dCMP-type deaminase domains span residues 29-138 and 214-328; these read HRNT…LRSL and GRHE…LRTL. The residue at position 32 (Thr32) is a Phosphothreonine; by PKA. Zn(2+)-binding residues include His65, Cys97, and Cys100. The segment at 209–336 is necessary for homooligomerization; sequence ELWVRGRHET…TLAKAGAKIS (128 aa). The interaction with DNA stretch occupies residues 213-215; the sequence is RGR. Residue Thr218 is modified to Phosphothreonine; by PKA and CAMK2. His257 provides a ligand contact to Zn(2+). Glu259 serves as the catalytic Proton donor. Residues Cys288 and Cys291 each coordinate Zn(2+). The tract at residues 313-320 is interaction with DNA; sequence RIYDDQGR.

The protein belongs to the cytidine and deoxycytidylate deaminase family. In terms of assembly, homodimer. Homooligomer. Can bind RNA to form ribonucleoprotein complexes of high-molecular-mass (HMM) or low-molecular-mass (LMM). HMM is inactive and heterogeneous in protein composition because of binding nonselectively to cellular RNAs, which in turn are associated with variety of cellular proteins. The LMM form which is enzymatically active has few or no RNAs associated. Its ability to form homooligomer is distinct from its ability to assemble into HMM. Interacts with APOBEC3B, APOBEC3F, MOV10, AGO2, EIF4E, EIF4ENIF1, DCP2 and DDX6 in an RNA-dependent manner. Interacts with AGO1, AGO3 and PKA/PRKACA. Zn(2+) is required as a cofactor.

The protein resides in the cytoplasm. Its subcellular location is the nucleus. The protein localises to the P-body. It catalyses the reaction a 2'-deoxycytidine in single-stranded DNA + H2O + H(+) = a 2'-deoxyuridine in single-stranded DNA + NH4(+). Functionally, DNA deaminase (cytidine deaminase) which acts as an inhibitor of retrovirus replication and retrotransposon mobility via deaminase-dependent and -independent mechanisms. Exhibits antiviral activity against vif-deficient: HIV-1 and simian immunodeficiency viruses (SIVs) and also against simian foamy virus (SFV). After the penetration of retroviral nucleocapsids into target cells of infection and the initiation of reverse transcription, it can induce the conversion of cytosine to uracil in the minus-sense single-strand viral DNA, leading to G-to-A hypermutations in the subsequent plus-strand viral DNA. The resultant detrimental levels of mutations in the proviral genome, along with a deamination-independent mechanism that works prior to the proviral integration, together exert efficient antiretroviral effects in infected target cells. Selectively targets single-stranded DNA and does not deaminate double-stranded DNA or single- or double-stranded RNA. May inhibit the mobility of LTR retrotransposons. The protein is DNA dC-&gt;dU-editing enzyme APOBEC-3G (APOBEC3G) of Pan troglodytes (Chimpanzee).